The primary structure comprises 460 residues: ATP synthase subunit beta (460 aa).

150-157 (GGAGVGKT) provides a ligand contact to ATP.

It belongs to the ATPase alpha/beta chains family. F-type ATPases have 2 components, CF(1) - the catalytic core - and CF(0) - the membrane proton channel. CF(1) has five subunits: alpha(3), beta(3), gamma(1), delta(1), epsilon(1). CF(0) has three main subunits: a(1), b(2) and c(9-12). The alpha and beta chains form an alternating ring which encloses part of the gamma chain. CF(1) is attached to CF(0) by a central stalk formed by the gamma and epsilon chains, while a peripheral stalk is formed by the delta and b chains.

Its subcellular location is the cell inner membrane. The enzyme catalyses ATP + H2O + 4 H(+)(in) = ADP + phosphate + 5 H(+)(out). Functionally, produces ATP from ADP in the presence of a proton gradient across the membrane. The catalytic sites are hosted primarily by the beta subunits. The chain is ATP synthase subunit beta from Salmonella agona (strain SL483).